The chain runs to 116 residues: Endoribonuclease EndoA (116 aa).

The protein belongs to the PemK/MazF family. Homodimer. Forms a complex with antitoxin EndoAI in which the toxin activity is inhibited. One dimer binds a ssRNA substrate, forms a heterohexamer composed of alternating toxin and antitoxin homodimers which inhibits the endoribonuclease activity. Antitoxin prevents RNA binding to the endoribonuclease.

Toxic component of a type II toxin-antitoxin (TA) system. Specific for 5'-UACAU-3' sequences, cleaving after the first U. Yields cleavage products with 3' phosphate and 5' hydroxyl groups. Cannot digest substrate with a UUdUACAUAA cleavage site. Overexpression is toxic for cell growth (shown in E.coli), probably by inhibiting protein synthesis through the cleavage of single-stranded RNA. The toxicity is reversed by the antitoxin EndoAI. Toxin activity cannot be inhibited by MazE from E.coli. The EndoA-EndoAI complex does not seem to bind its own promoter. The protein is Endoribonuclease EndoA of Bacillus subtilis (strain 168).